A 329-amino-acid polypeptide reads, in one-letter code: Capsular polysaccharide phosphotransferase WcwK (329 aa).

Belongs to the stealth family.

The sequence is that of Capsular polysaccharide phosphotransferase WcwK (wcwK) from Streptococcus pneumoniae.